A 78-amino-acid chain; its full sequence is Acyl carrier protein (78 aa).

Residues 2 to 77 enclose the Carrier domain; that stretch reads SDIAERVKKI…DAIKFLEKNA (76 aa). An O-(pantetheine 4'-phosphoryl)serine modification is found at S37.

The protein belongs to the acyl carrier protein (ACP) family. Post-translationally, 4'-phosphopantetheine is transferred from CoA to a specific serine of apo-ACP by AcpS. This modification is essential for activity because fatty acids are bound in thioester linkage to the sulfhydryl of the prosthetic group.

The protein resides in the cytoplasm. It functions in the pathway lipid metabolism; fatty acid biosynthesis. Functionally, carrier of the growing fatty acid chain in fatty acid biosynthesis. The protein is Acyl carrier protein of Azorhizobium caulinodans (strain ATCC 43989 / DSM 5975 / JCM 20966 / LMG 6465 / NBRC 14845 / NCIMB 13405 / ORS 571).